Consider the following 321-residue polypeptide: tRNA-dihydrouridine synthase B (321 aa).

FMN-binding positions include 16-18 (PMA) and Q70. C100 functions as the Proton donor in the catalytic mechanism. Residues K139, 200–202 (NGD), and 224–225 (GR) contribute to the FMN site.

Belongs to the Dus family. DusB subfamily. FMN serves as cofactor.

The catalysed reaction is a 5,6-dihydrouridine in tRNA + NAD(+) = a uridine in tRNA + NADH + H(+). It catalyses the reaction a 5,6-dihydrouridine in tRNA + NADP(+) = a uridine in tRNA + NADPH + H(+). Functionally, catalyzes the synthesis of 5,6-dihydrouridine (D), a modified base found in the D-loop of most tRNAs, via the reduction of the C5-C6 double bond in target uridines. This is tRNA-dihydrouridine synthase B from Shigella flexneri.